A 312-amino-acid polypeptide reads, in one-letter code: Methionyl-tRNA formyltransferase (312 aa).

112–115 (SLLP) is a binding site for (6S)-5,6,7,8-tetrahydrofolate.

It belongs to the Fmt family.

The catalysed reaction is L-methionyl-tRNA(fMet) + (6R)-10-formyltetrahydrofolate = N-formyl-L-methionyl-tRNA(fMet) + (6S)-5,6,7,8-tetrahydrofolate + H(+). Functionally, attaches a formyl group to the free amino group of methionyl-tRNA(fMet). The formyl group appears to play a dual role in the initiator identity of N-formylmethionyl-tRNA by promoting its recognition by IF2 and preventing the misappropriation of this tRNA by the elongation apparatus. The sequence is that of Methionyl-tRNA formyltransferase from Dehalococcoides mccartyi (strain CBDB1).